The sequence spans 120 residues: Glycine cleavage system H protein (120 aa).

One can recognise a Lipoyl-binding domain in the interval 17–99 (IATVGITAHA…RGAGWFFKLK (83 aa)). An N6-lipoyllysine modification is found at K58.

This sequence belongs to the GcvH family. As to quaternary structure, the glycine cleavage system is composed of four proteins: P, T, L and H. It depends on (R)-lipoate as a cofactor.

In terms of biological role, the glycine cleavage system catalyzes the degradation of glycine. The H protein shuttles the methylamine group of glycine from the P protein to the T protein. In Allorhizobium ampelinum (strain ATCC BAA-846 / DSM 112012 / S4) (Agrobacterium vitis (strain S4)), this protein is Glycine cleavage system H protein.